The chain runs to 259 residues: MLEKVKHIILVLSGKGGVGKSTVSTQLALTLSESKFKVGLLDIDLCGPSVPYLLGLEGHDVHQCEEGWVPVYTNADKNLAVMSIGFLLKNRTDAVIWRGPKKTAMIKQFLEDVAWEDLDYLIIDTPPGTSDEHITVMECLKAVNADGAIIVTTPQEMALEDVRKEVTFCKKTGINIIGIVENMSGFVCPNCTECTNIFSSGGGVALAELAKVPHLGTLPIDPRVGALAGSGKACVKELPDCTTSKILQSIADNISAEKS.

14–21 contacts ATP; that stretch reads GKGGVGKS. [4Fe-4S] cluster contacts are provided by cysteine 188 and cysteine 191.

The protein belongs to the Mrp/NBP35 ATP-binding proteins family. NUBP2/CFD1 subfamily. As to quaternary structure, heterotetramer of 2 Nubp1 and 2 Nubp2 chains. The cofactor is [4Fe-4S] cluster.

It is found in the cytoplasm. In terms of biological role, component of the cytosolic iron-sulfur (Fe/S) protein assembly (CIA) machinery. Required for maturation of extramitochondrial Fe-S proteins. The Nubp1-Nubp2 heterotetramer forms a Fe-S scaffold complex, mediating the de novo assembly of an Fe-S cluster and its transfer to target apoproteins. This Aedes aegypti (Yellowfever mosquito) protein is Cytosolic Fe-S cluster assembly factor Nubp2 homolog.